The following is a 224-amino-acid chain: UPF0758 protein XF_0148 (224 aa).

In terms of domain architecture, MPN spans 102–224 (SIHDPISAGR…PVSFAEHGWL (123 aa)). Residues H173, H175, and D186 each coordinate Zn(2+). A JAMM motif motif is present at residues 173–186 (HNHPSGNREPSPAD).

It belongs to the UPF0758 family.

The sequence is that of UPF0758 protein XF_0148 from Xylella fastidiosa (strain 9a5c).